Here is a 155-residue protein sequence, read N- to C-terminus: 6,7-dimethyl-8-ribityllumazine synthase (155 aa).

5-amino-6-(D-ribitylamino)uracil contacts are provided by residues Phe24, 58–60 (AFE), and 82–84 (VII). 87-88 (ST) serves as a coordination point for (2S)-2-hydroxy-3-oxobutyl phosphate. The active-site Proton donor is the His90. Phe115 serves as a coordination point for 5-amino-6-(D-ribitylamino)uracil. Arg129 is a (2S)-2-hydroxy-3-oxobutyl phosphate binding site.

Belongs to the DMRL synthase family.

The catalysed reaction is (2S)-2-hydroxy-3-oxobutyl phosphate + 5-amino-6-(D-ribitylamino)uracil = 6,7-dimethyl-8-(1-D-ribityl)lumazine + phosphate + 2 H2O + H(+). It participates in cofactor biosynthesis; riboflavin biosynthesis; riboflavin from 2-hydroxy-3-oxobutyl phosphate and 5-amino-6-(D-ribitylamino)uracil: step 1/2. Its function is as follows. Catalyzes the formation of 6,7-dimethyl-8-ribityllumazine by condensation of 5-amino-6-(D-ribitylamino)uracil with 3,4-dihydroxy-2-butanone 4-phosphate. This is the penultimate step in the biosynthesis of riboflavin. This Chlorobium chlorochromatii (strain CaD3) protein is 6,7-dimethyl-8-ribityllumazine synthase.